Consider the following 389-residue polypeptide: Gustatory receptor for bitter taste 22e (389 aa).

The Cytoplasmic segment spans residues Met1–Thr14. Residues Gly15–Tyr35 form a helical membrane-spanning segment. Residues Asp36–Lys46 lie on the Extracellular side of the membrane. A helical transmembrane segment spans residues Trp47–Asp67. Residues Thr68–Arg142 are Cytoplasmic-facing. A helical membrane pass occupies residues Phe143–Leu163. Over Gly164–Ser170 the chain is Extracellular. Asn168 carries an N-linked (GlcNAc...) asparagine glycan. A helical transmembrane segment spans residues Ala171–Ala191. Residues Ser192 to Gln254 are Cytoplasmic-facing. Residues Met255–Ile275 form a helical membrane-spanning segment. Residues Tyr276–Lys287 lie on the Extracellular side of the membrane. N-linked (GlcNAc...) asparagine glycosylation is present at Asn281. Residues Ile288 to Ile308 traverse the membrane as a helical segment. The Cytoplasmic portion of the chain corresponds to Cys309–Met366. A helical transmembrane segment spans residues Gly367–Trp387. The Extracellular portion of the chain corresponds to Asn388–Leu389.

This sequence belongs to the insect chemoreceptor superfamily. Gustatory receptor (GR) family. Gr22e subfamily. As to expression, taste bristles on the labial palp, labral and cibarial sense organs, chemosensory bristles on the leg and anterior wing margin. In larvae, is expressed in neurons of the terminal external chemosensory organ and in the dorsal pharyngeal sense organ. Neurons expressing Gr22e also express Gr66a and correspond to taste neurons that mediate sensitivity to bitter compounds.

It is found in the cell membrane. Its function is as follows. Gustatory receptor which mediates acceptance or avoidance behavior, depending on its substrates. Seems to be involved in the sensing of bitter taste since it is expressed in neurons that mediate sensitivity to bitter compounds which are also avoidance-type taste neurons. The sequence is that of Gustatory receptor for bitter taste 22e (Gr22e) from Drosophila melanogaster (Fruit fly).